The chain runs to 334 residues: Transcription factor TGA2.1 (334 aa).

Over residues 1 to 13 (MADASSRTDTSIV) the composition is skewed to polar residues. The segment at 1–49 (MADASSRTDTSIVVDNDDKNHQLENGHSGAVMASNSSDRSDRSDKLMDQ) is disordered. The segment covering 38 to 49 (DRSDRSDKLMDQ) has biased composition (basic and acidic residues). The 45-residue stretch at 48–92 (DQKTIRRLAQNREAARKSRLRKKAYVQQLESSKLKLAQLEQELQK) folds into the bZIP domain. A basic motif region spans residues 50–70 (KTIRRLAQNREAARKSRLRKK). The interval 76-90 (LESSKLKLAQLEQEL) is leucine-zipper. The 217-residue stretch at 115–331 (ALTFDLEYTR…RALSSLWLAR (217 aa)) folds into the DOG1 domain.

The protein belongs to the bZIP family. Interacts with NPR1/NH1 and NPR3/NH3.

The protein localises to the nucleus. Functionally, plays a negative role in rice basal defense responses to the bacterial blight pathogen Xanthomomas oryzae pv. oryzae (Xoo). May function in both positive and negative regulation of rice defense genes. Binds DNA in vitro. Acts as a transcriptional activator when bound to NPR1/NH1 in vitro. Binds to the promoter sequence of CRK10 in vitro. The sequence is that of Transcription factor TGA2.1 from Oryza sativa subsp. japonica (Rice).